Reading from the N-terminus, the 206-residue chain is A-type ATP synthase subunit D (206 aa).

It belongs to the V-ATPase D subunit family. In terms of assembly, has multiple subunits with at least A(3), B(3), C, D, E, F, H, I and proteolipid K(x).

The protein resides in the cell membrane. Functionally, component of the A-type ATP synthase that produces ATP from ADP in the presence of a proton gradient across the membrane. This chain is A-type ATP synthase subunit D, found in Methanococcoides burtonii (strain DSM 6242 / NBRC 107633 / OCM 468 / ACE-M).